Consider the following 530-residue polypeptide: Protein P80 (530 aa).

Residues M1–G22 form the signal peptide. The helical transmembrane segment at M491–V511 threads the bilayer.

Belongs to the SLC31A transporter family.

The protein resides in the late endosome membrane. This Dictyostelium discoideum (Social amoeba) protein is Protein P80 (p80).